A 358-amino-acid polypeptide reads, in one-letter code: 5,10-methenyltetrahydromethanopterin hydrogenase (358 aa).

Belongs to the HMD family. In terms of assembly, homotetramer.

It carries out the reaction 5,10-methenyl-5,6,7,8-tetrahydromethanopterin + H2 = 5,10-methylenetetrahydromethanopterin + H(+). It participates in one-carbon metabolism; methanogenesis from CO(2); 5,10-methylene-5,6,7,8-tetrahydromethanopterin from 5,10-methenyl-5,6,7,8-tetrahydromethanopterin (hydrogen route): step 1/1. Its activity is regulated as follows. Activity requires salt; 100 mM potassium phosphate, potassium chloride, and sodium chloride are equally effective. In terms of biological role, catalyzes the reversible reduction of methenyl-H(4)MPT(+) to methylene-H(4)MPT. This Methanopyrus kandleri (strain AV19 / DSM 6324 / JCM 9639 / NBRC 100938) protein is 5,10-methenyltetrahydromethanopterin hydrogenase.